The sequence spans 187 residues: Orotate phosphoribosyltransferase (187 aa).

5-phospho-alpha-D-ribose 1-diphosphate is bound by residues R98, K99, K102, H104, and 128–136 (EDVTTTGGS). 2 residues coordinate orotate: T132 and R160.

Belongs to the purine/pyrimidine phosphoribosyltransferase family. PyrE subfamily. In terms of assembly, homodimer. Mg(2+) serves as cofactor.

It catalyses the reaction orotidine 5'-phosphate + diphosphate = orotate + 5-phospho-alpha-D-ribose 1-diphosphate. The protein operates within pyrimidine metabolism; UMP biosynthesis via de novo pathway; UMP from orotate: step 1/2. Its function is as follows. Catalyzes the transfer of a ribosyl phosphate group from 5-phosphoribose 1-diphosphate to orotate, leading to the formation of orotidine monophosphate (OMP). The polypeptide is Orotate phosphoribosyltransferase (Bradyrhizobium diazoefficiens (strain JCM 10833 / BCRC 13528 / IAM 13628 / NBRC 14792 / USDA 110)).